The following is a 292-amino-acid chain: NAD kinase (292 aa).

Catalysis depends on Asp-73, which acts as the Proton acceptor. NAD(+) is bound by residues 73–74, 147–148, His-158, Arg-175, Asp-177, 188–193, and Gln-247; these read DG, NE, and TAYSLS.

It belongs to the NAD kinase family. Requires a divalent metal cation as cofactor.

It localises to the cytoplasm. It catalyses the reaction NAD(+) + ATP = ADP + NADP(+) + H(+). In terms of biological role, involved in the regulation of the intracellular balance of NAD and NADP, and is a key enzyme in the biosynthesis of NADP. Catalyzes specifically the phosphorylation on 2'-hydroxyl of the adenosine moiety of NAD to yield NADP. The sequence is that of NAD kinase from Escherichia coli (strain SMS-3-5 / SECEC).